The sequence spans 240 residues: EF-hand domain-containing protein D1 (240 aa).

Residues 17–54 (EVRAETDQGDPQPAPCDAPAGHPEPEPPARAPTASADS) form a disordered region. EF-hand domains follow at residues 91 to 126 (RLLK…LGAP) and 127 to 162 (QTHL…AAAG). Residues D104, D108, E115, D140, D142, D144, K146, and E151 each contribute to the Ca(2+) site.

As to expression, widely expressed. Highest expression in testis, followed by ovary, kidney, cerebrum, cerebellum, heart, liver, and spleen. In the cerebrum and cerebellum, undetectable at embryonic stages, expression increases after birth up to adult stage. In adult CNS, detected in neurons of the cerebellum, cerebrum and hippocampus formation, including dentate gyrus and Cornu Ammonis, but not in the white matter. In the testis, expressed in spermatocytes, but not in spermatogonia nor in interstitial cells. In ovary, found predominantly in mural granulosa cells and those of the cumulus oophorus. In kidney, expressed in collecting ducts, but not in glomeruli. Not detected in skeletal muscle.

Its subcellular location is the mitochondrion inner membrane. In terms of biological role, acts as a calcium sensor for mitochondrial flash (mitoflash) activation, an event characterized by stochastic bursts of superoxide production. May play a role in neuronal differentiation. This chain is EF-hand domain-containing protein D1 (Efhd1), found in Mus musculus (Mouse).